A 365-amino-acid chain; its full sequence is Class I histocompatibility antigen, B alpha chain (365 aa).

The first 24 residues, 1–24 (MTVMAPRTLLLLLSGALVLTETWA), serve as a signal peptide directing secretion. The alpha-1 stretch occupies residues 25–114 (GSHSMRYFST…ALGYYNQSEA (90 aa)). Residues 25–308 (GSHSMRYFST…EPPSQPTIPI (284 aa)) are Extracellular-facing. A glycan (N-linked (GlcNAc...) asparagine) is linked at asparagine 110. The interval 115 to 206 (GSHTIQMMSG…ENGKETLQRA (92 aa)) is alpha-2. Intrachain disulfides connect cysteine 125–cysteine 188 and cysteine 227–cysteine 283. The alpha-3 stretch occupies residues 207-298 (EPPKTHVTHH…GLPEPLTLRW (92 aa)). Positions 209 to 297 (PKTHVTHHPV…EGLPEPLTLR (89 aa)) constitute an Ig-like C1-type domain. The connecting peptide stretch occupies residues 299–308 (EPPSQPTIPI). The helical transmembrane segment at 309–332 (MGIVAILAILGAVVTGAVVTAVMW) threads the bilayer. Over 333 to 365 (RKKSSDKKGGSYSQAARSDSAQGSDVSLTACKV) the chain is Cytoplasmic. Positions 337–361 (SDKKGGSYSQAARSDSAQGSDVSLT) are disordered. Residues 346-359 (QAARSDSAQGSDVS) show a composition bias toward polar residues. 2 positions are modified to phosphoserine: serine 356 and serine 359.

It belongs to the MHC class I family. As to quaternary structure, heterodimer of an alpha chain and a beta chain (beta-2-microglobulin).

Its subcellular location is the membrane. Involved in the presentation of foreign antigens to the immune system. The chain is Class I histocompatibility antigen, B alpha chain from Saguinus oedipus (Cotton-top tamarin).